Reading from the N-terminus, the 402-residue chain is Speedy protein E21 (402 aa).

The segment at 1 to 90 (MDRTETRFRK…EPEKELAPEP (90 aa)) is disordered. The segment covering 16 to 39 (GKITTSRQLHPQNEQSPQRSTSGY) has biased composition (polar residues). Acidic residues predominate over residues 76 to 90 (DESEEEPEKELAPEP).

This sequence belongs to the Speedy/Ringo family.

In Homo sapiens (Human), this protein is Speedy protein E21.